The sequence spans 389 residues: MLLALAQWLQNDYSFLRVVNYLTFRAVMANLTALLIGLAFGPWVIRKLTELKVGQAVRTIGPQTHLVKAGTPTMGGVLVLVSIAVSTLLWCDWGNRFIWVVMLVTFGYGAIGWVDDYRKVVYRDPRGMSSREKFFWQTLIGLVAAVYLAFSVSESSNVRVWELFLNWVEGGLSLDMPYKSNLIVPFFKEISYPLGVAGFIVLTYLVIVGSSNAVNLTDGLDGLVIMPVVLVGGGLGVFAYVMGNSVYSKYLLFPHIPGAGELLIFCSALAGAGLAFLWFNAHPAQVFMGDVGALALGGALGTVAVIVRQEIVLFVMGGIFVVETLSVMAQVTWFKITKRRYGEGRRLFRMAPLHHHFELGGWKETQVTVRFWIITMLLVLIGLSTLKLR.

10 consecutive transmembrane segments (helical) span residues 25 to 45 (RAVM…PWVI), 74 to 94 (MGGV…CDWG), 97 to 117 (FIWV…VDDY), 134 to 154 (FFWQ…SVSE), 190 to 210 (ISYP…IVGS), 222 to 242 (GLVI…AYVM), 259 to 279 (AGEL…FLWF), 286 to 306 (VFMG…VAVI), 311 to 331 (IVLF…MAQV), and 366 to 386 (QVTV…LSTL).

The protein belongs to the glycosyltransferase 4 family. MraY subfamily. The cofactor is Mg(2+).

It is found in the cell inner membrane. It carries out the reaction UDP-N-acetyl-alpha-D-muramoyl-L-alanyl-gamma-D-glutamyl-meso-2,6-diaminopimeloyl-D-alanyl-D-alanine + di-trans,octa-cis-undecaprenyl phosphate = di-trans,octa-cis-undecaprenyl diphospho-N-acetyl-alpha-D-muramoyl-L-alanyl-D-glutamyl-meso-2,6-diaminopimeloyl-D-alanyl-D-alanine + UMP. Its pathway is cell wall biogenesis; peptidoglycan biosynthesis. Functionally, catalyzes the initial step of the lipid cycle reactions in the biosynthesis of the cell wall peptidoglycan: transfers peptidoglycan precursor phospho-MurNAc-pentapeptide from UDP-MurNAc-pentapeptide onto the lipid carrier undecaprenyl phosphate, yielding undecaprenyl-pyrophosphoryl-MurNAc-pentapeptide, known as lipid I. This chain is Phospho-N-acetylmuramoyl-pentapeptide-transferase, found in Cupriavidus necator (strain ATCC 17699 / DSM 428 / KCTC 22496 / NCIMB 10442 / H16 / Stanier 337) (Ralstonia eutropha).